A 218-amino-acid polypeptide reads, in one-letter code: Cytidylate kinase (218 aa).

Residue 11–19 coordinates ATP; the sequence is GPSGVGKST.

Belongs to the cytidylate kinase family. Type 1 subfamily.

It localises to the cytoplasm. The catalysed reaction is CMP + ATP = CDP + ADP. The enzyme catalyses dCMP + ATP = dCDP + ADP. The protein is Cytidylate kinase of Mycoplasmopsis synoviae (strain 53) (Mycoplasma synoviae).